We begin with the raw amino-acid sequence, 719 residues long: B3 domain-containing protein Os03g0120900 (719 aa).

Residues 7-110 (HHHFIKVMVG…HFMVLPFGLN (104 aa)) constitute a DNA-binding region (TF-B3). 2 disordered regions span residues 328–381 (RGSF…RSEQ) and 412–443 (EEPQ…RNAV). Over residues 351 to 366 (DSAENTLKERSEERQP) the composition is skewed to basic and acidic residues. Residues 416–430 (HNQGENEGNLDQVNN) show a composition bias toward polar residues.

It localises to the nucleus. The chain is B3 domain-containing protein Os03g0120900 from Oryza sativa subsp. japonica (Rice).